Here is a 276-residue protein sequence, read N- to C-terminus: TIMELESS-interacting protein (276 aa).

The tract at residues 1-54 (MLEQEENGLFEIPDYEHVEDETFPPFPPPGSPERDPAEAEPDEGSGAPVPVPPK) is disordered. The interaction with TIMELESS stretch occupies residues 64 to 140 (LDATRLTSER…KEVQTCLKRI (77 aa)). The segment covering 217–243 (SNSQSLENDVTVEESSTGENQEESNGL) has biased composition (polar residues). The tract at residues 217–276 (SNSQSLENDVTVEESSTGENQEESNGLISADGPHDVPSASTQEEGQLEAEETQLDHPNLD) is disordered. Ser219 carries the post-translational modification Phosphoserine. Position 233 is a phosphothreonine (Thr233).

This sequence belongs to the CSM3 family. As to quaternary structure, interacts with TIMELESS, which impairs TIMELESS self-association (via N-terminus). Associates with the MCM2-7 complex. Interacts with RPA2, PRDX2.

It localises to the cytoplasm. The protein localises to the nucleus. Functionally, plays an important role in the control of DNA replication and the maintenance of replication fork stability. Important for cell survival after DNA damage or replication stress. May be specifically required for the ATR-CHEK1 pathway in the replication checkpoint induced by hydroxyurea or ultraviolet light. Forms a complex with TIMELESS and this complex regulates DNA replication processes under both normal and stress conditions, stabilizes replication forks and influences both CHEK1 phosphorylation and the intra-S phase checkpoint in response to genotoxic stress. This is TIMELESS-interacting protein (Tipin) from Rattus norvegicus (Rat).